A 417-amino-acid polypeptide reads, in one-letter code: Dihydrolipoyllysine-residue succinyltransferase component of 2-oxoglutarate dehydrogenase complex (417 aa).

Residues 1 to 76 enclose the Lipoyl-binding domain; sequence MAEIKVPELA…QVGEIIGTIS (76 aa). At Lys42 the chain carries N6-lipoyllysine. The segment at 75 to 191 is disordered; that stretch reads ISEGAGESSA…SFDKPVEVQK (117 aa). 2 stretches are compositionally biased toward basic and acidic residues: residues 89–103 and 152–163; these read EKTE…EKQA and RKQDVEAYEKPA. Positions 123–160 constitute a Peripheral subunit-binding (PSBD) domain; that stretch reads IASPSARKLAREKGIDLSQVPTGDPLGRVRKQDVEAYE. The span at 164–182 shows a compositional bias: low complexity; that stretch reads SKPAPQQKQQPQAQKAQQS. Catalysis depends on residues His388 and Asp392.

This sequence belongs to the 2-oxoacid dehydrogenase family. Forms a 24-polypeptide structural core with octahedral symmetry. Part of the 2-oxoglutarate dehydrogenase (OGDH) complex composed of E1 (2-oxoglutarate dehydrogenase), E2 (dihydrolipoamide succinyltransferase) and E3 (dihydrolipoamide dehydrogenase); the complex contains multiple copies of the three enzymatic components (E1, E2 and E3). The cofactor is (R)-lipoate.

It carries out the reaction N(6)-[(R)-dihydrolipoyl]-L-lysyl-[protein] + succinyl-CoA = N(6)-[(R)-S(8)-succinyldihydrolipoyl]-L-lysyl-[protein] + CoA. The protein operates within amino-acid degradation; L-lysine degradation via saccharopine pathway; glutaryl-CoA from L-lysine: step 6/6. Its function is as follows. E2 component of the 2-oxoglutarate dehydrogenase (OGDH) complex which catalyzes the second step in the conversion of 2-oxoglutarate to succinyl-CoA and CO(2). The sequence is that of Dihydrolipoyllysine-residue succinyltransferase component of 2-oxoglutarate dehydrogenase complex (odhB) from Bacillus subtilis (strain 168).